Reading from the N-terminus, the 309-residue chain is Homoserine O-succinyltransferase (309 aa).

Cysteine 142 (acyl-thioester intermediate) is an active-site residue. Residues lysine 163 and serine 192 each contribute to the substrate site. The active-site Proton acceptor is histidine 235. The active site involves glutamate 237. Arginine 249 provides a ligand contact to substrate.

The protein belongs to the MetA family. Homodimer.

The protein resides in the cytoplasm. The catalysed reaction is L-homoserine + succinyl-CoA = O-succinyl-L-homoserine + CoA. It functions in the pathway amino-acid biosynthesis; L-methionine biosynthesis via de novo pathway; O-succinyl-L-homoserine from L-homoserine: step 1/1. In terms of biological role, transfers a succinyl group from succinyl-CoA to L-homoserine, forming succinyl-L-homoserine. This Salmonella choleraesuis (strain SC-B67) protein is Homoserine O-succinyltransferase.